The following is a 491-amino-acid chain: UDP-N-acetylmuramate--L-alanine ligase (491 aa).

126 to 132 is an ATP binding site; the sequence is GTHGKTT.

Belongs to the MurCDEF family.

It localises to the cytoplasm. The enzyme catalyses UDP-N-acetyl-alpha-D-muramate + L-alanine + ATP = UDP-N-acetyl-alpha-D-muramoyl-L-alanine + ADP + phosphate + H(+). It participates in cell wall biogenesis; peptidoglycan biosynthesis. In terms of biological role, cell wall formation. This is UDP-N-acetylmuramate--L-alanine ligase from Shigella dysenteriae serotype 1 (strain Sd197).